Here is a 339-residue protein sequence, read N- to C-terminus: RNA 3'-terminal phosphate cyclase (339 aa).

ATP-binding positions include Asp109 and 286 to 290 (HLADQ). His310 acts as the Tele-AMP-histidine intermediate in catalysis.

The protein belongs to the RNA 3'-terminal cyclase family. Type 1 subfamily.

It is found in the cytoplasm. The catalysed reaction is a 3'-end 3'-phospho-ribonucleotide-RNA + ATP = a 3'-end 2',3'-cyclophospho-ribonucleotide-RNA + AMP + diphosphate. Its function is as follows. Catalyzes the conversion of 3'-phosphate to a 2',3'-cyclic phosphodiester at the end of RNA. The mechanism of action of the enzyme occurs in 3 steps: (A) adenylation of the enzyme by ATP; (B) transfer of adenylate to an RNA-N3'P to produce RNA-N3'PP5'A; (C) and attack of the adjacent 2'-hydroxyl on the 3'-phosphorus in the diester linkage to produce the cyclic end product. The biological role of this enzyme is unknown but it is likely to function in some aspects of cellular RNA processing. The protein is RNA 3'-terminal phosphate cyclase of Halobacterium salinarum (strain ATCC 29341 / DSM 671 / R1).